Consider the following 416-residue polypeptide: Catalase-peroxidase 2 (416 aa).

A signal peptide spans 1–20 (MLLPLIVFLLSVLIHHRIYS).

The protein belongs to the peroxidase family. Peroxidase/catalase subfamily. Homodimer or homotetramer. It depends on heme b as a cofactor. Post-translationally, formation of the three residue Trp-Tyr-Met cross-link is important for the catalase, but not the peroxidase activity of the enzyme.

The enzyme catalyses H2O2 + AH2 = A + 2 H2O. It carries out the reaction 2 H2O2 = O2 + 2 H2O. Bifunctional enzyme with both catalase and broad-spectrum peroxidase activity. The protein is Catalase-peroxidase 2 (katG2) of Alkaliphilus metalliredigens (strain QYMF).